Reading from the N-terminus, the 129-residue chain is Protein Turandot C (129 aa).

A signal peptide spans 1-21; that stretch reads MNASISLLCFALLLISPFCLG.

This sequence belongs to the Turandot family.

The protein resides in the secreted. A humoral factor that may play a role in stress tolerance. This chain is Protein Turandot C, found in Drosophila sechellia (Fruit fly).